The sequence spans 342 residues: Forkhead box protein D5-C (342 aa).

The interval 1–89 (MNLSQDSSAH…KHSLDTTTNG (89 aa)) is disordered. Acidic residues predominate over residues 20 to 34 (SDDEDEIDILGEDDP). The segment covering 59 to 70 (SKLSCNESASHS) has biased composition (polar residues). A compositionally biased stretch (basic and acidic residues) spans 71–83 (SGERERGTSKHSL). The segment at residues 97-191 (KPPYSYIALI…DNGSFLRRRK (95 aa)) is a DNA-binding region (fork-head).

In terms of tissue distribution, at the onset of gastrulation, expressed in the superficial layer of cells in the dorsal blastopore lip (Spemann organizer). In the open neural plate, expressed in a row of cells destined to become the floor plate of the neural tube. After neural tube closure, only detected in the tailtip and a small area located at the midbrain/hindbrain boundary.

Its subcellular location is the nucleus. Its function is as follows. Transcriptional repressor. In Xenopus laevis (African clawed frog), this protein is Forkhead box protein D5-C (foxd5-c).